The chain runs to 179 residues: UPF0227 protein VP0969 (179 aa).

It belongs to the UPF0227 family.

This chain is UPF0227 protein VP0969, found in Vibrio parahaemolyticus serotype O3:K6 (strain RIMD 2210633).